We begin with the raw amino-acid sequence, 233 residues long: uncharacterized protein (233 aa).

This is an uncharacterized protein from Methanocaldococcus jannaschii (strain ATCC 43067 / DSM 2661 / JAL-1 / JCM 10045 / NBRC 100440) (Methanococcus jannaschii).